A 240-amino-acid polypeptide reads, in one-letter code: MNAEKSPENHNVDHEEIAKFEAVASRWWDLEGEFKPLHRINPLRLGYIAERAGGLFGKKVLDVGCGGGILAESMAREGATVTGLDMGFEPLQVAKLHALESGIQVDYVQETVEEHAAKHAGQYDVVTCMEMLEHVPDPQSVVRACAQLVKPGGDVFFSTLNRNGKSWLMAVVGAEYILRMVPKGTHDVKKFIKPAELLGWVDQTSLKERHITGLHYNPITNSFKLGPGVDVNYMLHTQNK.

Arginine 44, glycine 64, aspartate 85, and methionine 129 together coordinate S-adenosyl-L-methionine.

The protein belongs to the methyltransferase superfamily. UbiG/COQ3 family.

The catalysed reaction is a 3-demethylubiquinol + S-adenosyl-L-methionine = a ubiquinol + S-adenosyl-L-homocysteine + H(+). The enzyme catalyses a 3-(all-trans-polyprenyl)benzene-1,2-diol + S-adenosyl-L-methionine = a 2-methoxy-6-(all-trans-polyprenyl)phenol + S-adenosyl-L-homocysteine + H(+). It participates in cofactor biosynthesis; ubiquinone biosynthesis. Functionally, O-methyltransferase that catalyzes the 2 O-methylation steps in the ubiquinone biosynthetic pathway. This Shigella flexneri serotype 5b (strain 8401) protein is Ubiquinone biosynthesis O-methyltransferase.